A 509-amino-acid chain; its full sequence is Steroid 17-alpha-hydroxylase/17,20 lyase (509 aa).

Cys445 contacts heme.

This sequence belongs to the cytochrome P450 family. Heme is required as a cofactor.

Its subcellular location is the membrane. The catalysed reaction is a C21-steroid + reduced [NADPH--hemoprotein reductase] + O2 = a 17alpha-hydroxy-C21-steroid + oxidized [NADPH--hemoprotein reductase] + H2O + H(+). The enzyme catalyses 17alpha-hydroxyprogesterone + reduced [NADPH--hemoprotein reductase] + O2 = androst-4-ene-3,17-dione + acetate + oxidized [NADPH--hemoprotein reductase] + H2O + 2 H(+). It catalyses the reaction 17alpha-hydroxypregnenolone + reduced [NADPH--hemoprotein reductase] + O2 = 3beta-hydroxyandrost-5-en-17-one + acetate + oxidized [NADPH--hemoprotein reductase] + H2O + 2 H(+). It functions in the pathway lipid metabolism; steroid biosynthesis. Functionally, conversion of pregnenolone and progesterone to their 17-alpha-hydroxylated products and subsequently to dehydroepiandrosterone (DHEA) and androstenedione. Catalyzes both the 17-alpha-hydroxylation and the 17,20-lyase reaction. In Squalus acanthias (Spiny dogfish), this protein is Steroid 17-alpha-hydroxylase/17,20 lyase (CYP17A1).